A 265-amino-acid chain; its full sequence is Mlc titration factor A (265 aa).

Residues His-111, His-148, His-152, and Glu-211 each contribute to the Zn(2+) site.

The protein belongs to the MtfA family. As to quaternary structure, interacts with Mlc. Zn(2+) is required as a cofactor.

The protein localises to the cytoplasm. In terms of biological role, involved in the modulation of the activity of the glucose-phosphotransferase system (glucose-PTS). Interacts with the transcriptional repressor Mlc, preventing its interaction with DNA and leading to the modulation of expression of genes regulated by Mlc, including ptsG, which encodes the PTS system glucose-specific EIICB component. Functionally, shows zinc-dependent metallopeptidase activity. The chain is Mlc titration factor A from Salmonella agona (strain SL483).